Reading from the N-terminus, the 402-residue chain is Nodulation protein E (402 aa).

The 400-residue stretch at 2-401 (DRRVVITGIG…GMNAVLAFRQ (400 aa)) folds into the Ketosynthase family 3 (KS3) domain. Active-site for beta-ketoacyl synthase activity residues include Cys162, His294, and His331. A helical membrane pass occupies residues 329–348 (HAHCLGAASALEMIACVMAI).

It belongs to the thiolase-like superfamily. Beta-ketoacyl-ACP synthases family.

It localises to the cell inner membrane. In terms of biological role, proposed to synthesize NOD factor fatty acyl chain. Involved in the synthesis of a highly unsaturated fatty acid moiety, which forms part of a lipo-oligosaccharide that is responsible for host specificity. This Rhizobium sp. (strain N33) protein is Nodulation protein E (nodE).